The chain runs to 98 residues: NADH-ubiquinone oxidoreductase chain 4L (98 aa).

The next 3 helical transmembrane spans lie at 1 to 21 (MTSINLNLMTAFLLALAGVLM), 28 to 48 (STLLCLEGMMLSLYIMLSLLI), and 59 to 79 (APLILLVISACEAAGGLALLV).

Belongs to the complex I subunit 4L family. As to quaternary structure, core subunit of respiratory chain NADH dehydrogenase (Complex I) which is composed of 45 different subunits.

The protein resides in the mitochondrion inner membrane. It carries out the reaction a ubiquinone + NADH + 5 H(+)(in) = a ubiquinol + NAD(+) + 4 H(+)(out). Core subunit of the mitochondrial membrane respiratory chain NADH dehydrogenase (Complex I) which catalyzes electron transfer from NADH through the respiratory chain, using ubiquinone as an electron acceptor. Part of the enzyme membrane arm which is embedded in the lipid bilayer and involved in proton translocation. This Phascolarctos cinereus (Koala) protein is NADH-ubiquinone oxidoreductase chain 4L (MT-ND4L).